Reading from the N-terminus, the 229-residue chain is Prolactin (229 aa).

A signal peptide spans 1-30 (MDSKVSSQKGSRLLLLLVVSNLLLCQGVVS). C34 and C41 are oxidised to a cystine. S56, S64, and S120 each carry phosphoserine. 2 cysteine pairs are disulfide-bonded: C88/C204 and C221/C229.

It belongs to the somatotropin/prolactin family. As to quaternary structure, interacts with PRLR.

Its subcellular location is the secreted. Its function is as follows. Prolactin acts primarily on the mammary gland by promoting lactation. The protein is Prolactin (PRL) of Cervus elaphus (Red deer).